The following is a 358-amino-acid chain: Probable aminomethyltransferase (358 aa).

The protein belongs to the GcvT family. In terms of assembly, the glycine cleavage system is composed of four proteins: P, T, L and H.

The enzyme catalyses N(6)-[(R)-S(8)-aminomethyldihydrolipoyl]-L-lysyl-[protein] + (6S)-5,6,7,8-tetrahydrofolate = N(6)-[(R)-dihydrolipoyl]-L-lysyl-[protein] + (6R)-5,10-methylene-5,6,7,8-tetrahydrofolate + NH4(+). Functionally, the glycine cleavage system catalyzes the degradation of glycine. The protein is Probable aminomethyltransferase of Natronomonas pharaonis (strain ATCC 35678 / DSM 2160 / CIP 103997 / JCM 8858 / NBRC 14720 / NCIMB 2260 / Gabara) (Halobacterium pharaonis).